Here is a 276-residue protein sequence, read N- to C-terminus: Lipoyl synthase (276 aa).

Residues Cys-27, Cys-32, Cys-38, Cys-53, Cys-57, Cys-60, and Ser-266 each contribute to the [4Fe-4S] cluster site. The Radical SAM core domain occupies 39-255 (FGNKTATFMI…EEIGYEMGFK (217 aa)).

It belongs to the radical SAM superfamily. Lipoyl synthase family. The cofactor is [4Fe-4S] cluster.

It is found in the cytoplasm. The catalysed reaction is [[Fe-S] cluster scaffold protein carrying a second [4Fe-4S](2+) cluster] + N(6)-octanoyl-L-lysyl-[protein] + 2 oxidized [2Fe-2S]-[ferredoxin] + 2 S-adenosyl-L-methionine + 4 H(+) = [[Fe-S] cluster scaffold protein] + N(6)-[(R)-dihydrolipoyl]-L-lysyl-[protein] + 4 Fe(3+) + 2 hydrogen sulfide + 2 5'-deoxyadenosine + 2 L-methionine + 2 reduced [2Fe-2S]-[ferredoxin]. Its pathway is protein modification; protein lipoylation via endogenous pathway; protein N(6)-(lipoyl)lysine from octanoyl-[acyl-carrier-protein]: step 2/2. In terms of biological role, catalyzes the radical-mediated insertion of two sulfur atoms into the C-6 and C-8 positions of the octanoyl moiety bound to the lipoyl domains of lipoate-dependent enzymes, thereby converting the octanoylated domains into lipoylated derivatives. The polypeptide is Lipoyl synthase (Aquifex aeolicus (strain VF5)).